A 424-amino-acid polypeptide reads, in one-letter code: Phosphoribosylamine--glycine ligase (424 aa).

The ATP-grasp domain maps to 111–312; the sequence is KAFVKECGIK…LLDLFLATAK (202 aa). 137–189 is an ATP binding site; that stretch reads IQNASFPLVIKALNKNTSIVHHQEEALKILEDALKQSNEPVIIEPFLEGFELS.

The protein belongs to the GARS family.

The catalysed reaction is 5-phospho-beta-D-ribosylamine + glycine + ATP = N(1)-(5-phospho-beta-D-ribosyl)glycinamide + ADP + phosphate + H(+). It functions in the pathway purine metabolism; IMP biosynthesis via de novo pathway; N(1)-(5-phospho-D-ribosyl)glycinamide from 5-phospho-alpha-D-ribose 1-diphosphate: step 2/2. The protein is Phosphoribosylamine--glycine ligase (purD) of Helicobacter pylori (strain J99 / ATCC 700824) (Campylobacter pylori J99).